Reading from the N-terminus, the 788-residue chain is MTKPVADTSAVLTSEDTLVLASMGSPVEMQLIMDWLGEQRARTPGAKFDVLKLPPRNAPTAALTALVEQLESGSEAGADRSIVPVQVFWQPPADRSRLAKVAGLLPGRDPYHPNPRQQRRILRSDPQRARVMAGESATVSELRKQWRDNTVGEDQHDFAHFVARRAILALARAEYRILGPQYKSPRLVKPEMLASARFRAGLEKIPGATVEEAGKMLDELATGWSQASVDVFSVLGRLISRGFDPEFDYDEYQVAAMRTALEAHPAVLLFSHRSYIDGAVVPVAMQDNRLPPVHMFGGVNLSFGVMGPLMRRAGMIFIRRNIAGDPLYKYVLKEYVGYVVEKRFNLSWSIEGTRSRTGKMLPPKLGLMSYVADAYLDGRSDDILLQGVSICFDQLHEIAEYAAYARGAEKTPEGFSWLYNFIKAQGERNYGKIYVRFPEAVSMRQYLGVPHGPITHDLAAKRLALQKMSFEVAWRILRATPMTATGLVCALLLTARGTALTLGQLHHTLQDSLDYLERKQTPMSTSALRLRSREGVRAAVDALSNAHPVTRVDSGREPVWYIAPEDELAAAFYRNSVIHAFLETSIVELALAHARHAEGDRMAAFWDQVMRLRDLLKFDFYFADSAAFRANIAEEMAWHRDWESQVAAGGDQIDAILYAKRPLISDAMLRVFFEAYAIVADVLRDAPANIKQKDLTDLALGLGRQYVAQARVRSSEPVSTLLFATARQVVDDQHLIEPAPDLTERRSAFLAELRNILRDFDYVGKIARNRFVARELKARQERLEQQAQ.

The disordered stretch occupies residues 104–135 (LLPGRDPYHPNPRQQRRILRSDPQRARVMAGE). Residues 271–276 (SHRSYI) carry the HXXXXD motif motif.

This sequence belongs to the GPAT/DAPAT family.

It is found in the cell membrane. It carries out the reaction sn-glycerol 3-phosphate + an acyl-CoA = a 1-acyl-sn-glycero-3-phosphate + CoA. It functions in the pathway phospholipid metabolism; CDP-diacylglycerol biosynthesis; CDP-diacylglycerol from sn-glycerol 3-phosphate: step 1/3. The chain is Glycerol-3-phosphate acyltransferase from Mycobacterium marinum (strain ATCC BAA-535 / M).